We begin with the raw amino-acid sequence, 304 residues long: N-acetyl-D-glucosamine kinase (304 aa).

ATP is bound by residues 4–11 and 133–140; these read GFDMGGTK and GVGGGLIV. Zn(2+) contacts are provided by His-157, Cys-177, Cys-179, and Cys-184.

This sequence belongs to the ROK (NagC/XylR) family. NagK subfamily.

The catalysed reaction is N-acetyl-D-glucosamine + ATP = N-acetyl-D-glucosamine 6-phosphate + ADP + H(+). It functions in the pathway cell wall biogenesis; peptidoglycan recycling. Catalyzes the phosphorylation of N-acetyl-D-glucosamine (GlcNAc) derived from cell-wall degradation, yielding GlcNAc-6-P. The sequence is that of N-acetyl-D-glucosamine kinase from Yersinia pseudotuberculosis serotype O:1b (strain IP 31758).